We begin with the raw amino-acid sequence, 1055 residues long: Leukotoxin (1055 aa).

Residues 11-49 are a coiled coil; it reads QQAAQFANSVADRAKENIDAAKEQLQKALDKLGKTGKKL. 2 cholesterol recognition/amino acid consensus (CRAC) region regions span residues 334–340 and 502–506; these read LEEYSKR and VDYLK. Hemolysin-type calcium-binding repeat units lie at residues 721 to 738, 739 to 756, 757 to 774, 775 to 792, 793 to 810, 811 to 828, and 829 to 846; these read IGSTLRDKFYGSKFNDVF, HGHDGDDLIYGYDGDDRL, YGDNGNDEIHGGQGNDKL, YGGAGNDRLFGEYGNNYL, DGGEGDDHLEGGNGSDIL, RGGSGNDKLFGNQGDDLL, and DGGEGDDQLAGGEGNDIY. Residues 795 to 815 are disordered; it reads GEGDDHLEGGNGSDILRGGSG. Residues 990 to 1009 form a disordered region; the sequence is KGKSSSLMSSSRSSSMLTQK. Over residues 993–1006 the composition is skewed to low complexity; the sequence is SSSLMSSSRSSSML.

This sequence belongs to the RTX prokaryotic toxin (TC 1.C.11) family. As to quaternary structure, interacts specifically with the superoxide dismutase [Cu-Zn]. This interaction may protect LtxA from reactive oxygen species and reactive nitrogen species produced by host inflammatory cells during disease. Interacts with the human leukocyte adhesion glycoprotein LFA-1 (ITGAL-ITGB2). Post-translationally, acylated at Lys-562 and Lys-687 by LtxC. This modification is required for full activity. Isolated methyl esters contain palmitoyl and palmitolyl fatty acyl groups with smaller quantities of myristic and stearic fatty acids.

The protein resides in the cell outer membrane. Its subcellular location is the secreted. Its function is as follows. Virulence factor that plays an important role in immune evasion. Lyses human lymphocytes and monocytes. Binds to the LFA-1 integrin on the surface of the host cell and to cholesterol-containing membranes, which probably results in large LtxA-LFA-1 clusters in lipid rafts. Also shows beta-hemolytic activity on certain types of growth media. The chain is Leukotoxin from Aggregatibacter actinomycetemcomitans (Actinobacillus actinomycetemcomitans).